The following is a 361-amino-acid chain: Chorismate synthase (361 aa).

Residues Arg48 and Arg54 each contribute to the NADP(+) site. FMN contacts are provided by residues 131–133 (RSS), 243–244 (NA), Gly287, 302–306 (KPTSS), and Arg328.

Belongs to the chorismate synthase family. Homotetramer. Requires FMNH2 as cofactor.

The enzyme catalyses 5-O-(1-carboxyvinyl)-3-phosphoshikimate = chorismate + phosphate. It participates in metabolic intermediate biosynthesis; chorismate biosynthesis; chorismate from D-erythrose 4-phosphate and phosphoenolpyruvate: step 7/7. Catalyzes the anti-1,4-elimination of the C-3 phosphate and the C-6 proR hydrogen from 5-enolpyruvylshikimate-3-phosphate (EPSP) to yield chorismate, which is the branch point compound that serves as the starting substrate for the three terminal pathways of aromatic amino acid biosynthesis. This reaction introduces a second double bond into the aromatic ring system. This chain is Chorismate synthase, found in Rhodopseudomonas palustris (strain HaA2).